Consider the following 345-residue polypeptide: MADGLILRAIRGKAKTLNLNGKRLQRVPVAVGCLISLTELQLKNNLLCRLPVELSALCRLRVLHLGNNHFEKVPEEIKYLKCLERLHLFGNRISEIPAAALDGLDNLLFLNLNNNLLEHLPREIYKLQSLETLSINNNHMKAIPKELCFLQNLQELHLANNQLDSLPDELSYLTNLKELRLSRNQLTGLPEGICKLIKLKILDVAGNFIRSFPSAMHRVPLTELYCEENPLLEKQPVFARQQEEILTLKEITARLILNHLRSRNSFFIEQIQQHPEARSVLSSRNICALCGTWFLDMWLECVTFVDVKKKMKTSSNLQLLPVRVLLCSYRCFNQKQAGIFGVAVQ.

10 LRR repeats span residues 13 to 34, 36 to 58, 59 to 80, 82 to 103, 106 to 127, 129 to 151, 152 to 173, 175 to 196, 198 to 219, and 220 to 241; these read KAKT…VGCL, SLTE…SALC, RLRV…IKYL, CLER…ALDG, NLLF…IYKL, SLET…CFLQ, NLQE…LSYL, NLKE…ICKL, KLKI…MHRV, and PLTE…FARQ.

This sequence belongs to the LRRC69 family.

This chain is Leucine-rich repeat-containing protein 69 (lrrc69), found in Xenopus laevis (African clawed frog).